A 713-amino-acid chain; its full sequence is MVTNNGDGEHLGIRRNGNLRHPSNNMKIPRRAQSTVLNSNPFYSRKYSMSTLTPRDICRSVDSRVFVDMSSPNFQTLEDPHRDEIINSVRLNYLNSSKRSSVSHGNEAIPRVNPTKNSSASTIAAANVDSDDDETNLSSAGGDITHDIYKLVKAEDPKRLRRPRSMENVTPKIEHHTKLSSASGLNVPGGFRREFIVNKKRQEHQLNDSASSDFTSHESDSINQSSPSSNQDIDKVPFLTRNFLEFLYVFGHFAGESFEDDFIPDSSNMMIRGEDERSALLSRPDHMKVLPSAKGTTSTKKVFLILLKSFIGTGVLFLPNAFHNGGLFFSVSMLAFFGIYSYWCYYILVQAKSSCGVSSFGDIGLKLYGPWMRIIILFSLVITQVGFSGAYMIFTAKNLQAFLDNVFHVGVLPLSYLMVFQTIIFIPLSFIRNISKLSLPSLLANFFIMAGLVIVIIFTAKRLFFDLMGTPAMGVVYGLNADRWTLFIGTAIFAFEGIGLIIPVQDSMRNPEKFPLVLALVILTATILFISIATLGYLAYGSNVQTVILLNLPQSNIFVNLIQLFYSIAIMLSTPLQLFPAIKIIENKFFPKFTKIYVKHDDLTTRVELRPNSGKLNWKIKWLKNFIRSIIVIIVVSIAYFGSDNLDKFVSVIGSLACIPLVYIYPSMLHLRGNSLPETKGEFWRFKPMLDTILIFFGIASMLYTSYQSIFGV.

A disordered region spans residues 1–33 (MVTNNGDGEHLGIRRNGNLRHPSNNMKIPRRAQ). The Vacuolar segment spans residues 1–242 (MVTNNGDGEH…IDKVPFLTRN (242 aa)). Residues 21–33 (HPSNNMKIPRRAQ) are compositionally biased toward polar residues. Serine 88 is subject to Phosphoserine. Residues 99 to 121 (RSSVSHGNEAIPRVNPTKNSSAS) are disordered. Phosphoserine is present on residues serine 130 and serine 165. Residues 200–233 (KRQEHQLNDSASSDFTSHESDSINQSSPSSNQDI) are disordered. Residues 221 to 231 (SINQSSPSSNQ) are compositionally biased toward low complexity. A helical membrane pass occupies residues 243–263 (FLEFLYVFGHFAGESFEDDFI). At 264–301 (PDSSNMMIRGEDERSALLSRPDHMKVLPSAKGTTSTKK) the chain is on the cytoplasmic side. Residues 302–322 (VFLILLKSFIGTGVLFLPNAF) traverse the membrane as a helical segment. Over 323–326 (HNGG) the chain is Vacuolar. Residues 327–347 (LFFSVSMLAFFGIYSYWCYYI) traverse the membrane as a helical segment. The Cytoplasmic portion of the chain corresponds to 348–373 (LVQAKSSCGVSSFGDIGLKLYGPWMR). The helical transmembrane segment at 374–394 (IIILFSLVITQVGFSGAYMIF) threads the bilayer. Residues 395–410 (TAKNLQAFLDNVFHVG) are Vacuolar-facing. The helical transmembrane segment at 411-431 (VLPLSYLMVFQTIIFIPLSFI) threads the bilayer. Topologically, residues 432–438 (RNISKLS) are cytoplasmic. The helical transmembrane segment at 439 to 459 (LPSLLANFFIMAGLVIVIIFT) threads the bilayer. At 460 to 483 (AKRLFFDLMGTPAMGVVYGLNADR) the chain is on the vacuolar side. Residues 484-504 (WTLFIGTAIFAFEGIGLIIPV) traverse the membrane as a helical segment. The Cytoplasmic segment spans residues 505–515 (QDSMRNPEKFP). Residues 516 to 536 (LVLALVILTATILFISIATLG) form a helical membrane-spanning segment. The Vacuolar segment spans residues 537-561 (YLAYGSNVQTVILLNLPQSNIFVNL). The chain crosses the membrane as a helical span at residues 562-582 (IQLFYSIAIMLSTPLQLFPAI). The Cytoplasmic portion of the chain corresponds to 583 to 621 (KIIENKFFPKFTKIYVKHDDLTTRVELRPNSGKLNWKIK). Residues 622–642 (WLKNFIRSIIVIIVVSIAYFG) traverse the membrane as a helical segment. The Vacuolar segment spans residues 643–648 (SDNLDK). A helical membrane pass occupies residues 649-669 (FVSVIGSLACIPLVYIYPSML). Residues 670 to 692 (HLRGNSLPETKGEFWRFKPMLDT) are Cytoplasmic-facing. A helical membrane pass occupies residues 693 to 711 (ILIFFGIASMLYTSYQSIF). Topologically, residues 712–713 (GV) are vacuolar.

The protein belongs to the amino acid/polyamine transporter 2 family.

The protein localises to the vacuole membrane. Involved in amino acid efflux from the vacuole to the cytoplasm. Capable of transporting large neutral amino acids including tyrosine, glutamine, asparagine, isoleucine and leucine. In Saccharomyces cerevisiae (strain ATCC 204508 / S288c) (Baker's yeast), this protein is Vacuolar amino acid transporter 4 (AVT4).